The sequence spans 1063 residues: Structural polyprotein (1063 aa).

A disordered region spans residues 1-131 (MASTTPITME…LGPPTNPFQA (131 aa)). The interval 30 to 69 (GASQSRRPRPPRQRDSSTSGDDSGRDSGGPRRRRGNRGRG) is human C1QBP/SF2P32-binding. Residue Ser-46 is modified to Phosphoserine; by host. The segment covering 59-69 (PRRRRGNRGRG) has biased composition (basic residues). Residues 93–107 (APKPSRAPPQQPQPP) are compositionally biased toward pro residues. A disulfide bond links Cys-153 and Cys-197. The functions as E2 signal peptide stretch occupies residues 279-300 (GAPQAFLAGLLLAAVAVGTARA). At 301-534 (GLQPRADMAA…LWLATANALS (234 aa)) the chain is on the extracellular side. The disordered stretch occupies residues 305–347 (RADMAAPPAPPQPPCAHGQHYGHHHHQLPFLGHDGHHGGTLRV). Residues Asn-353, Asn-371, Asn-410, and Asn-429 are each glycosylated (N-linked (GlcNAc...) asparagine; by host). Residues 535-555 (LDHALAAFVLLFPWVLIFMVC) traverse the membrane as a helical segment. Topologically, residues 556-582 (RRACRRRGAAAALTAVVLQGYNPPAYG) are cytoplasmic. The functions as E1 signal peptide stretch occupies residues 563-582 (GAAAALTAVVLQGYNPPAYG). Over 583–1028 (EEAFTYLCTA…QTWAEWAAAH (446 aa)) the chain is Extracellular. 8 disulfides stabilise this stretch: Cys-590/Cys-595, Cys-619/Cys-824, Cys-641/Cys-653, Cys-699/Cys-712, Cys-758/Cys-767, Cys-807/Cys-817, Cys-931/Cys-934, and Cys-950/Cys-983. A glycan (N-linked (GlcNAc...) asparagine; by host) is linked at Asn-658. Positions 670 and 671 each coordinate Ca(2+). Residues Asp-718 and Thr-719 each coordinate Ca(2+). N-linked (GlcNAc...) asparagine; by host glycans are attached at residues Asn-759 and Asn-791. O-linked (GalNAc...) threonine; by host glycans are attached at residues Thr-1011 and Thr-1012. The helical transmembrane segment at 1029–1049 (WWQLTLGAVCALLLAGLLACC) threads the bilayer. At 1050 to 1063 (AKCLYYLRGAIAPR) the chain is on the extracellular side.

As to quaternary structure, homodimer; further assembles into homooligomer. Interacts with human C1QBP. Interacts (via N-terminus) with protease/methyltransferase p150. In terms of assembly, heterodimer with spike glycoprotein E2. Heterodimer with spike glycoprotein E1. In terms of processing, structural polyprotein: Specific enzymatic cleavages in vivo yield mature proteins. Two signal peptidase-mediated cleavages within the polyprotein produce the structural proteins capsid, E2, and E1. The E2 signal peptide remains attached to the C-terminus of the capsid protein after cleavage by the signal peptidase. Another signal peptide at E2 C-terminus directs E1 to the ER, with a similar mechanism. Contains three N-linked oligosaccharides. Post-translationally, capsid is phosphorylated on Ser-46 by host. This phosphorylation negatively regulates capsid protein RNA-binding activity. Dephosphorylated by human PP1A.

It localises to the virion. It is found in the host cytoplasm. The protein localises to the host mitochondrion. The protein resides in the virion membrane. Its subcellular location is the host Golgi apparatus membrane. Its function is as follows. Capsid protein interacts with genomic RNA and assembles into icosahedric core particles 65-70 nm in diameter. The resulting nucleocapsid eventually associates with the cytoplasmic domain of E2 at the cell membrane, leading to budding and formation of mature virions from host Golgi membranes. Phosphorylation negatively regulates RNA-binding activity, possibly delaying virion assembly during the viral replication phase. Capsid protein dimerizes and becomes disulfide-linked in the virion. Modulates genomic RNA replication. Modulates subgenomic RNA synthesis by interacting with human C1QBP/SF2P32. Induces both perinuclear clustering of mitochondria and the formation of electron-dense intermitochondrial plaques, both hallmarks of rubella virus infected cells. Induces apoptosis when expressed in transfected cells. Responsible for viral attachment to target host cell, by binding to the cell receptor. Its transport to the plasma membrane depends on interaction with E1 protein. The surface glycoproteins display an irregular helical organization and a pseudo-tetrameric inner nucleocapsid arrangement. Functionally, class II viral fusion protein. Fusion activity is inactive as long as E1 is bound to E2 in mature virion. After virus attachment to target cell and clathrin-mediated endocytosis, acidification of the endosome would induce dissociation of E1/E2 heterodimer and concomitant trimerization of the E1 subunits. This E1 homotrimer is fusion active, and promotes release of viral nucleocapsid in cytoplasm after endosome and viral membrane fusion. The cytoplasmic tail of spike glycoprotein E1 modulates virus release. The surface glycoproteins display an irregular helical organization and a pseudo-tetrameric inner nucleocapsid arrangement. This chain is Structural polyprotein, found in Rubella virus (strain RN-UK86) (RUBV).